The following is a 181-amino-acid chain: Endoglucanase (181 aa).

An intrachain disulfide couples C4 to C16. D24 serves as the catalytic Nucleophile. Intrachain disulfides connect C30-C69, C32-C176, C65-C178, C72-C157, and C103-C113. Catalysis depends on D132, which acts as the Proton donor.

In terms of tissue distribution, digestive gland.

The catalysed reaction is Endohydrolysis of (1-&gt;4)-beta-D-glucosidic linkages in cellulose, lichenin and cereal beta-D-glucans.. Active towards the soluble carboxymethylcellulose (CMC). Possesses expansin activity too. The polypeptide is Endoglucanase (Mytilus edulis (Blue mussel)).